The primary structure comprises 333 residues: tRNA N6-adenosine threonylcarbamoyltransferase (333 aa).

Fe cation-binding residues include His-111 and His-115. Substrate is bound by residues Leu-134–Gly-138, Asp-167, Gly-180, and Asn-272. A Fe cation-binding site is contributed by Asp-300.

The protein belongs to the KAE1 / TsaD family. Fe(2+) is required as a cofactor.

The protein resides in the cytoplasm. The catalysed reaction is L-threonylcarbamoyladenylate + adenosine(37) in tRNA = N(6)-L-threonylcarbamoyladenosine(37) in tRNA + AMP + H(+). Its function is as follows. Required for the formation of a threonylcarbamoyl group on adenosine at position 37 (t(6)A37) in tRNAs that read codons beginning with adenine. Is involved in the transfer of the threonylcarbamoyl moiety of threonylcarbamoyl-AMP (TC-AMP) to the N6 group of A37, together with TsaE and TsaB. TsaD likely plays a direct catalytic role in this reaction. The sequence is that of tRNA N6-adenosine threonylcarbamoyltransferase from Hamiltonella defensa subsp. Acyrthosiphon pisum (strain 5AT).